The sequence spans 208 residues: FMN-dependent NADH:quinone oxidoreductase (208 aa).

FMN is bound by residues Ser-10, 16–18 (SRS), and 96–99 (MYNF).

The protein belongs to the azoreductase type 1 family. In terms of assembly, homodimer. FMN is required as a cofactor.

The catalysed reaction is 2 a quinone + NADH + H(+) = 2 a 1,4-benzosemiquinone + NAD(+). The enzyme catalyses N,N-dimethyl-1,4-phenylenediamine + anthranilate + 2 NAD(+) = 2-(4-dimethylaminophenyl)diazenylbenzoate + 2 NADH + 2 H(+). Its function is as follows. Quinone reductase that provides resistance to thiol-specific stress caused by electrophilic quinones. Functionally, also exhibits azoreductase activity. Catalyzes the reductive cleavage of the azo bond in aromatic azo compounds to the corresponding amines. The sequence is that of FMN-dependent NADH:quinone oxidoreductase from Xanthobacter autotrophicus (strain ATCC BAA-1158 / Py2).